The primary structure comprises 162 residues: Phosphopantetheine adenylyltransferase (162 aa).

Thr-10 is a substrate binding site. Residues 10–11 and His-18 each bind ATP; that span reads TF. Positions 42, 74, and 88 each coordinate substrate. Residues 89 to 91, Glu-99, and 124 to 130 contribute to the ATP site; these read GLR and YAFLSST.

Belongs to the bacterial CoaD family. Homohexamer. Mg(2+) serves as cofactor.

Its subcellular location is the cytoplasm. It carries out the reaction (R)-4'-phosphopantetheine + ATP + H(+) = 3'-dephospho-CoA + diphosphate. It participates in cofactor biosynthesis; coenzyme A biosynthesis; CoA from (R)-pantothenate: step 4/5. Its function is as follows. Reversibly transfers an adenylyl group from ATP to 4'-phosphopantetheine, yielding dephospho-CoA (dPCoA) and pyrophosphate. This chain is Phosphopantetheine adenylyltransferase, found in Aliivibrio fischeri (strain ATCC 700601 / ES114) (Vibrio fischeri).